Reading from the N-terminus, the 376-residue chain is Glutamate 5-kinase (376 aa).

Residue Lys-15 coordinates ATP. Substrate is bound by residues Ser-55, Asp-141, and Asn-153. Residues 173–174 (SD) and 215–221 (TGGMQTK) each bind ATP. A PUA domain is found at 280–361 (AGRLTVDAGA…HAIAEVLDEA (82 aa)).

The protein belongs to the glutamate 5-kinase family.

It is found in the cytoplasm. It carries out the reaction L-glutamate + ATP = L-glutamyl 5-phosphate + ADP. It participates in amino-acid biosynthesis; L-proline biosynthesis; L-glutamate 5-semialdehyde from L-glutamate: step 1/2. In terms of biological role, catalyzes the transfer of a phosphate group to glutamate to form L-glutamate 5-phosphate. The sequence is that of Glutamate 5-kinase from Salinibacter ruber (strain DSM 13855 / M31).